A 421-amino-acid chain; its full sequence is Lipid II:glycine glycyltransferase (421 aa).

This sequence belongs to the FemABX family. In terms of assembly, monomer.

It is found in the cytoplasm. It carries out the reaction beta-D-GlcNAc-(1-&gt;4)-Mur2Ac(oyl-L-Ala-D-isoglutaminyl-L-Lys-D-Ala-D-Ala)-di-trans,octa-cis-undecaprenyl diphosphate + glycyl-tRNA(Gly) = beta-D-GlcNAc-(1-&gt;4)-Mur2Ac(oyl-L-Ala-D-isoglutaminyl-L-Lys-(N(6)-Gly)-D-Ala-D-Ala)-di-trans,octa-cis-undecaprenyl diphosphate + tRNA(Gly) + H(+). In terms of biological role, catalyzes the incorporation of the first glycine of the pentaglycine interpeptide bridge, which is characteristic of the S.aureus peptidoglycan. This glycine is added to the epsilon-amino group of the L-lysine of the membrane-bound lipid II intermediate (GlcNAc-(beta-1,4)-N-acetylmuramic acid(-L-Ala-D-iGln-L-Lys-D-Ala-D-Ala)-pyrophosphoryl-undecaprenol), using glycyl-tRNA(Gly) as donor, in a ribosome-independent mechanism. The protein is Lipid II:glycine glycyltransferase (femX) of Staphylococcus aureus (strain MSSA476).